The primary structure comprises 38 residues: Phospholipase A2 1 (38 aa).

Ca(2+)-binding residues include Tyr28, Gly30, and Gly32.

The protein belongs to the phospholipase A2 family. Group I subfamily. Ca(2+) is required as a cofactor. In terms of tissue distribution, expressed by the venom gland.

It localises to the secreted. The catalysed reaction is a 1,2-diacyl-sn-glycero-3-phosphocholine + H2O = a 1-acyl-sn-glycero-3-phosphocholine + a fatty acid + H(+). Functionally, snake venom phospholipase A2 (PLA2) that inhibits neuromuscular transmission by blocking acetylcholine release from the nerve termini. PLA2 catalyzes the calcium-dependent hydrolysis of the 2-acyl groups in 3-sn-phosphoglycerides. The protein is Phospholipase A2 1 of Calliophis bivirgatus (Blue Malaysian coral snake).